The chain runs to 377 residues: Protein RecA (377 aa).

65 to 72 provides a ligand contact to ATP; it reads GPESSGKT. A disordered region spans residues 329–377; sequence GDEEAAATKATETKTDAPKDKDKGKTKAKDKPADVTPGQIELAPDKSAK. Residues 339–361 are compositionally biased toward basic and acidic residues; sequence TETKTDAPKDKDKGKTKAKDKPA.

This sequence belongs to the RecA family.

The protein resides in the cytoplasm. Can catalyze the hydrolysis of ATP in the presence of single-stranded DNA, the ATP-dependent uptake of single-stranded DNA by duplex DNA, and the ATP-dependent hybridization of homologous single-stranded DNAs. It interacts with LexA causing its activation and leading to its autocatalytic cleavage. This chain is Protein RecA, found in Levilactobacillus brevis (strain ATCC 367 / BCRC 12310 / CIP 105137 / JCM 1170 / LMG 11437 / NCIMB 947 / NCTC 947) (Lactobacillus brevis).